The primary structure comprises 118 residues: DNA-binding protein Msm_0708 (118 aa).

A disordered region spans residues 16-39 (EARQAAAQGQMQQQAQQQMQQQEA). Low complexity predominate over residues 18 to 39 (RQAAAQGQMQQQAQQQMQQQEA).

It belongs to the PDCD5 family.

The chain is DNA-binding protein Msm_0708 from Methanobrevibacter smithii (strain ATCC 35061 / DSM 861 / OCM 144 / PS).